Reading from the N-terminus, the 1349-residue chain is Elongator complex protein 1 (1349 aa).

S529, S539, S551, S636, and S828 each carry phosphoserine. The segment at 919 to 1349 is mediates dimerization; that stretch reads QDVNVVYKSA…DFPKSHIVDF (431 aa). S1198 and S1202 each carry phosphoserine; by HRR25. A phosphoserine mark is found at S1205 and S1209. The span at 1214–1228 shows a compositional bias: low complexity; the sequence is YTGKTGGTAKTGASR. Residues 1214-1245 are disordered; it reads YTGKTGGTAKTGASRRTAKNKRREERKRARGK. Residues 1228–1246 are required for binding to tRNA; that stretch reads RRTAKNKRREERKRARGKK.

It belongs to the ELP1/IKA1 family. As to quaternary structure, homodimer; dimerization promotes ELP1/IKI3 stability and elongator complex formation. Component of the elongator complex which consists of ELP1/IKI3, ELP2, ELP3, ELP4, ELP5/IKI1 and ELP6. The elongator complex is composed of two copies of the Elp123 subcomplex (composed of ELP1/IKI3, ELP2 and ELP3) and two copies of the Elp456 subcomplex (composed of ELP4, ELP5/IKI1 and ELP6). The Elp123 subcomplex forms a two-lobed scaffold, which binds the Elp456 subcomplex asymmetrically. In the complex, ELP1/IKI3 interacts with ELP2. In each lobe, ELP2 is tightly sandwiched between ELP1/IKI3 and ELP3. The Elp123 subcomplex binds tRNA through ELP1/IKI3 and ELP3 and can bind 2 tRNAs simultaneously. tRNA-binding induces conformational rearrangements which precisely position the targeted anticodon base in the active site. The Elp456 subcomplex binds tRNA and has ATPase activity. ELP1/IKI3 interacts with HRR25 and KTI12. Interacts with KTI11/DPH3. Post-translationally, phosphorylation promotes the tRNA modification function of the elongator complex.

The protein resides in the cytoplasm. Its subcellular location is the nucleus. Its pathway is tRNA modification; 5-methoxycarbonylmethyl-2-thiouridine-tRNA biosynthesis. Functionally, component of the elongator complex which is required for multiple tRNA modifications, including mcm5U (5-methoxycarbonylmethyl uridine), mcm5s2U (5-methoxycarbonylmethyl-2-thiouridine), and ncm5U (5-carbamoylmethyl uridine). The elongator complex catalyzes formation of carboxymethyluridine in the wobble base at position 34 in tRNAs. Functions as a gamma-toxin target (TOT); disruption of the complex confers resistance to Kluyveromyces lactis toxin zymocin (pGKL1 killer toxin). May also be involved in sensitivity to Pichia inositovora toxin. ELP1/IKI3 binds to tRNA, mediating interaction of the elongator complex with tRNA. Independently, may be involved in polarized exocytosis. In Saccharomyces cerevisiae (strain ATCC 204508 / S288c) (Baker's yeast), this protein is Elongator complex protein 1 (IKI3).